The sequence spans 143 residues: Large-conductance mechanosensitive channel (143 aa).

A run of 2 helical transmembrane segments spans residues 16-36 (VIDL…VTAL) and 84-104 (INTV…VKLI).

The protein belongs to the MscL family. Homopentamer.

It is found in the cell inner membrane. Functionally, channel that opens in response to stretch forces in the membrane lipid bilayer. May participate in the regulation of osmotic pressure changes within the cell. This chain is Large-conductance mechanosensitive channel, found in Xanthomonas axonopodis pv. citri (strain 306).